Consider the following 290-residue polypeptide: Non-homologous end joining protein Ku (290 aa).

Positions 11 to 183 constitute a Ku domain; sequence TFGLISMPVR…EAPKITSEVK (173 aa). Residues 253–290 form a disordered region; sequence MKDQKKGSRLAEVDKESTVQMTPKKPAVKERRGRKRVA. Basic and acidic residues predominate over residues 254–269; the sequence is KDQKKGSRLAEVDKES.

The protein belongs to the prokaryotic Ku family. As to quaternary structure, homodimer. Interacts with LigD.

Functionally, with LigD forms a non-homologous end joining (NHEJ) DNA repair enzyme, which repairs dsDNA breaks with reduced fidelity. Binds linear dsDNA with 5'- and 3'- overhangs but not closed circular dsDNA nor ssDNA. Recruits and stimulates the ligase activity of LigD. This is Non-homologous end joining protein Ku from Koribacter versatilis (strain Ellin345).